The chain runs to 199 residues: Holliday junction branch migration complex subunit RuvA (199 aa).

The segment at 1-63 (MIASVRGEVL…EDSMTLYGFS (63 aa)) is domain I. The interval 64 to 141 (DTESKDLFSL…DAVATTAGAA (78 aa)) is domain II. The flexible linker stretch occupies residues 141 to 145 (ASGAV). Residues 146 to 199 (VGSSIRDQIVEALEGLGFPIKQAEQATDSVLAESPEATTSVALRSALSLLGKTR) form a domain III region.

It belongs to the RuvA family. Homotetramer. Forms an RuvA(8)-RuvB(12)-Holliday junction (HJ) complex. HJ DNA is sandwiched between 2 RuvA tetramers; dsDNA enters through RuvA and exits via RuvB. An RuvB hexamer assembles on each DNA strand where it exits the tetramer. Each RuvB hexamer is contacted by two RuvA subunits (via domain III) on 2 adjacent RuvB subunits; this complex drives branch migration. In the full resolvosome a probable DNA-RuvA(4)-RuvB(12)-RuvC(2) complex forms which resolves the HJ.

It is found in the cytoplasm. Functionally, the RuvA-RuvB-RuvC complex processes Holliday junction (HJ) DNA during genetic recombination and DNA repair, while the RuvA-RuvB complex plays an important role in the rescue of blocked DNA replication forks via replication fork reversal (RFR). RuvA specifically binds to HJ cruciform DNA, conferring on it an open structure. The RuvB hexamer acts as an ATP-dependent pump, pulling dsDNA into and through the RuvAB complex. HJ branch migration allows RuvC to scan DNA until it finds its consensus sequence, where it cleaves and resolves the cruciform DNA. In Rhodococcus erythropolis (strain PR4 / NBRC 100887), this protein is Holliday junction branch migration complex subunit RuvA.